The following is a 468-amino-acid chain: 6-phospho-beta-galactosidase 2 (468 aa).

5 residues coordinate D-galactose 6-phosphate: glutamine 19, histidine 116, asparagine 159, glutamate 160, and asparagine 297. The active-site Proton donor is glutamate 160. Residue glutamate 375 is the Nucleophile of the active site. Positions 428, 429, 435, and 437 each coordinate D-galactose 6-phosphate.

This sequence belongs to the glycosyl hydrolase 1 family.

It carries out the reaction a 6-phospho-beta-D-galactoside + H2O = D-galactose 6-phosphate + an alcohol. The protein operates within carbohydrate metabolism; lactose degradation; D-galactose 6-phosphate and beta-D-glucose from lactose 6-phosphate: step 1/1. The chain is 6-phospho-beta-galactosidase 2 from Streptococcus pneumoniae (strain ATCC BAA-255 / R6).